The following is a 75-amino-acid chain: Mating pheromone Er-10 (75 aa).

The first 19 residues, 1 to 19 (MNKLAILAIIAMVLFSANA), serve as a signal peptide directing secretion. A propeptide spanning residues 20–37 (FRFQSRIRSNVEAKTETR) is cleaved from the precursor. Cystine bridges form between cysteine 40-cysteine 56, cysteine 47-cysteine 74, and cysteine 52-cysteine 64.

Homodimer.

It localises to the secreted. Mating ciliate pheromones (or gamones) are diffusible extracellular communication signals that distinguish different intraspecific classes of cells commonly referred to as 'mating types'. They prepare the latter for conjugation by changing their cell surface properties. The chain is Mating pheromone Er-10 (MAT10) from Euplotes raikovi.